Consider the following 515-residue polypeptide: MDEFHRYGKEDSSWQQCFLYPLFFQEDLYAISHDHYLDGSSSSEPMEHLSSNDQFSFLTVKRLIGQIRQQNHSIVLFVNCDPNPLVDRKKSSYSESVLEGLTLVLEVPFSIRSKYSVEGMNEWKSFRSIHSIFPFLEDKFPHSNYVSDTRIPYSIHPEILVRTFRRWIGDAPSLHPLRSILYEYRNSSESLQRSIIVVPKVNTRFFLFLWNNYVYECESILVSLLKRSSHSRSLSHGSFPQRTHFHRKIKNIFLFSRRNSFQSIWSLKDPNIHYVRYGERSIIAIKGTHLLVKKYRYYLPIFRQCYFHLWNEPYRVCFHQLSKNCSSSLGYFLRVRMKPLLVKTKMLDELFIADLITDEFDPIVPIVPIIGLLSREKFCDISGRPISKLSWTSLTDDDILDRFDRIWRNIFHYYSGSFGRDGLYRIKYILSLSCAKTLACKHKSTIRVVRKELGPELFKKSFSKERELDSPPFSSKAAARSQRERIWHSDIPQINPLAHSWQKIQDLKIENLFDQ.

This sequence belongs to the intron maturase 2 family. MatK subfamily.

The protein resides in the plastid. Its subcellular location is the chloroplast. Its function is as follows. Usually encoded in the trnK tRNA gene intron. Probably assists in splicing its own and other chloroplast group II introns. In Picea mariana (Black spruce), this protein is Maturase K.